The primary structure comprises 611 residues: mRNA export factor GLE1 (611 aa).

2 disordered regions span residues Ser69 to Cys94 and Lys220 to Arg243. Positions Asp71–Asp89 are enriched in acidic residues.

This sequence belongs to the GLE1 family. As to quaternary structure, part of the nuclear pore complex (NPC). The NPC has an eight-fold symmetrical structure comprising a central transport channel and two rings, the cytoplasmic and nuclear rings, to which eight filaments are attached. The cytoplasmic filaments have loose ends, while the nuclear filaments are joined in a distal ring, forming a nuclear basket. NPCs are highly dynamic in configuration and composition, and can be devided in 3 subcomplexes, the NUP62 subcomplex, the NUP107-160 subcomplex and the NUP93 subcomplex, containing approximately 30 different nucleoporin proteins.

The protein localises to the nucleus envelope. It is found in the nucleus. The protein resides in the nuclear pore complex. In terms of biological role, required for seed viability. The sequence is that of mRNA export factor GLE1 from Arabidopsis thaliana (Mouse-ear cress).